The following is a 1265-amino-acid chain: Kinesin-related protein 13 (1265 aa).

The region spanning 23 to 350 (NIQAFVRVRP…LEYALKAKNI (328 aa)) is the Kinesin motor domain. Position 106–113 (106–113 (GQTGTGKT)) interacts with ATP. The stretch at 331 to 459 (LVNLEETINT…KQQQEKQKFI (129 aa)) forms a coiled coil. 5 disordered regions span residues 918 to 1026 (KSGE…QPLI), 1085 to 1119 (SLVNESPFSSPKLSKQKILQDQIQPPQPPSILSQL), 1127 to 1146 (LQPQQPQQQPPSFFNNLNGS), 1158 to 1214 (LLDD…NQSL), and 1245 to 1265 (FGGGSTISSKLKSLKQQTPLK). The segment covering 930–951 (IPSPISTSSSSSSSSSISSIHS) has biased composition (low complexity). Polar residues-rich tracts occupy residues 960-980 (HQSINNSIKSNNFDGSKSINC), 1003-1026 (LNLNSTPKSVSKNLKSSQQQQPLI), and 1085-1097 (SLVNESPFSSPKL). Low complexity-rich tracts occupy residues 1100–1119 (QKILQDQIQPPQPPSILSQL) and 1128–1146 (QPQQPQQQPPSFFNNLNGS). Residues 1158-1169 (LLDDDSDSDNSD) show a composition bias toward acidic residues. A compositionally biased stretch (low complexity) spans 1174-1195 (SLLSSNKKSSRASKNAVVSKKV). A compositionally biased stretch (polar residues) spans 1250–1265 (TISSKLKSLKQQTPLK).

It belongs to the TRAFAC class myosin-kinesin ATPase superfamily. Kinesin family. BimC subfamily.

Its subcellular location is the cytoplasm. It is found in the cytoskeleton. Its function is as follows. Microtubule-associated force-producing protein that plays a role in organelle transport. Its motor activity is directed toward the microtubule's plus end. Cooperates with dynein to control the spindle elongation rate, but is dispensable for mitosis. The protein is Kinesin-related protein 13 (kif13) of Dictyostelium discoideum (Social amoeba).